The primary structure comprises 207 residues: Guanylate kinase (207 aa).

Positions 4 to 184 (GILFIISAPS…AVNDLITIIT (181 aa)) constitute a Guanylate kinase-like domain. ATP is bound at residue 11–18 (APSGTGKS).

Belongs to the guanylate kinase family.

The protein resides in the cytoplasm. It carries out the reaction GMP + ATP = GDP + ADP. Functionally, essential for recycling GMP and indirectly, cGMP. The chain is Guanylate kinase (gmk) from Buchnera aphidicola subsp. Acyrthosiphon pisum (strain APS) (Acyrthosiphon pisum symbiotic bacterium).